A 226-amino-acid chain; its full sequence is Potassium/proton antiporter CemA (226 aa).

3 consecutive transmembrane segments (helical) span residues 7 to 27, 111 to 131, and 186 to 206; these read FTSL…SLSF, IICF…LFIL, and IISG…KYWI.

Belongs to the CemA family.

Its subcellular location is the plastid. The protein localises to the chloroplast inner membrane. It catalyses the reaction K(+)(in) + H(+)(out) = K(+)(out) + H(+)(in). In terms of biological role, contributes to K(+)/H(+) antiport activity by supporting proton efflux to control proton extrusion and homeostasis in chloroplasts in a light-dependent manner to modulate photosynthesis. Prevents excessive induction of non-photochemical quenching (NPQ) under continuous-light conditions. Indirectly promotes efficient inorganic carbon uptake into chloroplasts. This chain is Potassium/proton antiporter CemA, found in Buxus microphylla (Littleleaf boxwood).